A 91-amino-acid polypeptide reads, in one-letter code: ATP synthase subunit c (91 aa).

Helical transmembrane passes span 4–24 (FTMCVLAAGIGMALGTLGTGI) and 53–73 (IGLAMIESLAIYALVVCLIIL).

This sequence belongs to the ATPase C chain family. F-type ATPases have 2 components, F(1) - the catalytic core - and F(0) - the membrane proton channel. F(1) has five subunits: alpha(3), beta(3), gamma(1), delta(1), epsilon(1). F(0) has three main subunits: a(1), b(2) and c(10-14). The alpha and beta chains form an alternating ring which encloses part of the gamma chain. F(1) is attached to F(0) by a central stalk formed by the gamma and epsilon chains, while a peripheral stalk is formed by the delta and b chains.

The protein resides in the cell inner membrane. Its function is as follows. F(1)F(0) ATP synthase produces ATP from ADP in the presence of a proton or sodium gradient. F-type ATPases consist of two structural domains, F(1) containing the extramembraneous catalytic core and F(0) containing the membrane proton channel, linked together by a central stalk and a peripheral stalk. During catalysis, ATP synthesis in the catalytic domain of F(1) is coupled via a rotary mechanism of the central stalk subunits to proton translocation. Functionally, key component of the F(0) channel; it plays a direct role in translocation across the membrane. A homomeric c-ring of between 10-14 subunits forms the central stalk rotor element with the F(1) delta and epsilon subunits. In Citrifermentans bemidjiense (strain ATCC BAA-1014 / DSM 16622 / JCM 12645 / Bem) (Geobacter bemidjiensis), this protein is ATP synthase subunit c.